Consider the following 443-residue polypeptide: Xaa-Pro dipeptidase (443 aa).

Residues D246, D257, H339, E384, and E423 each contribute to the Mn(2+) site.

Belongs to the peptidase M24B family. Bacterial-type prolidase subfamily. It depends on Mn(2+) as a cofactor.

The catalysed reaction is Xaa-L-Pro dipeptide + H2O = an L-alpha-amino acid + L-proline. Splits dipeptides with a prolyl residue in the C-terminal position. This is Xaa-Pro dipeptidase from Escherichia coli (strain 55989 / EAEC).